A 376-amino-acid polypeptide reads, in one-letter code: Glutamate 5-kinase (376 aa).

Residue K10 participates in ATP binding. Residues S50, D137, and N149 each contribute to the substrate site. 169-170 lines the ATP pocket; it reads TD. Positions 275-353 constitute a PUA domain; the sequence is RGRLVLDAGA…AEIAGVLGFM (79 aa).

This sequence belongs to the glutamate 5-kinase family.

It is found in the cytoplasm. It catalyses the reaction L-glutamate + ATP = L-glutamyl 5-phosphate + ADP. It participates in amino-acid biosynthesis; L-proline biosynthesis; L-glutamate 5-semialdehyde from L-glutamate: step 1/2. Functionally, catalyzes the transfer of a phosphate group to glutamate to form L-glutamate 5-phosphate. This chain is Glutamate 5-kinase, found in Alcanivorax borkumensis (strain ATCC 700651 / DSM 11573 / NCIMB 13689 / SK2).